Consider the following 282-residue polypeptide: Ribosome biogenesis GTPase A (282 aa).

Positions 14 to 178 (RREVTEKLKL…LLDTPGILWP (165 aa)) constitute a CP-type G domain. Residues 58–61 (NKAD), 86–87 (NS), 130–135 (NVGKST), and glycine 174 contribute to the GTP site.

Belongs to the TRAFAC class YlqF/YawG GTPase family. MTG1 subfamily. Interacts with ctc. Interacts with the immature 50S ribosome subunit. 2 molecules of RbgA bind to one 50S subunit.

The protein localises to the cytoplasm. Functionally, essential protein that is required for a late step of 50S ribosomal subunit assembly. Has GTPase activity that is stimulated by interaction with the immature 50S ribosome subunit. Binds to the 23S rRNA. Required for the association of ribosomal proteins RplP and RpmA with the large subunit. The polypeptide is Ribosome biogenesis GTPase A (rbgA) (Bacillus subtilis (strain 168)).